The primary structure comprises 560 residues: Ubiquitin carboxyl-terminal hydrolase MINDY-3 homolog (560 aa).

Over residues 1 to 13 (MNEKIVREQRGGE) the composition is skewed to basic and acidic residues. Disordered regions lie at residues 1-30 (MNEK…AASA) and 44-91 (SHKT…MLNA). Low complexity-rich tracts occupy residues 15–30 (SPSS…AASA) and 52–81 (TASS…SSSS). Cys-139 serves as the catalytic Nucleophile. A disordered region spans residues 203-237 (TEAGSTKKRSPAGEEESALAGQAAGSSEEVEEAAE). 2 positions are modified to phosphoserine: Ser-212 and Ser-219. Catalysis depends on His-403, which acts as the Proton acceptor.

It belongs to the MINDY deubiquitinase family. FAM188 subfamily.

It carries out the reaction Thiol-dependent hydrolysis of ester, thioester, amide, peptide and isopeptide bonds formed by the C-terminal Gly of ubiquitin (a 76-residue protein attached to proteins as an intracellular targeting signal).. Functionally, hydrolase that can remove 'Lys-48'-linked conjugated ubiquitin from proteins. The chain is Ubiquitin carboxyl-terminal hydrolase MINDY-3 homolog (mindy3) from Drosophila melanogaster (Fruit fly).